Consider the following 546-residue polypeptide: Probable T-complex protein 1 subunit theta (546 aa).

A disordered region spans residues 527 to 546 (MSKPAGGPKPPGPNPHWDDD).

This sequence belongs to the TCP-1 chaperonin family. As to quaternary structure, heterooligomeric complex of about 850 to 900 kDa that forms two stacked rings, 12 to 16 nm in diameter.

The protein localises to the cytoplasm. In terms of biological role, molecular chaperone; assists the folding of proteins upon ATP hydrolysis. Known to play a role, in vitro, in the folding of actin and tubulin. The polypeptide is Probable T-complex protein 1 subunit theta (cct8) (Schizosaccharomyces pombe (strain 972 / ATCC 24843) (Fission yeast)).